The primary structure comprises 340 residues: Gallate dioxygenase (340 aa).

His-45 serves as the catalytic Proton donor. His-113 functions as the Proton acceptor in the catalytic mechanism.

Belongs to the LigB/MhpB extradiol dioxygenase family. Fe(2+) is required as a cofactor.

The catalysed reaction is 3,4,5-trihydroxybenzoate + O2 = (1E)-4-oxobut-1-ene-1,2,4-tricarboxylate + 2 H(+). Ring-cleavage dioxygenase that acts specifically on gallate to produce the keto-tautomer of 4-oxalomesaconate. Mediates the first step of gallate degradation pathway. This chain is Gallate dioxygenase (galA), found in Pseudomonas putida (strain ATCC 47054 / DSM 6125 / CFBP 8728 / NCIMB 11950 / KT2440).